A 135-amino-acid chain; its full sequence is Ribonuclease P protein component (135 aa).

This sequence belongs to the RnpA family. Consists of a catalytic RNA component (M1 or rnpB) and a protein subunit.

It carries out the reaction Endonucleolytic cleavage of RNA, removing 5'-extranucleotides from tRNA precursor.. Functionally, RNaseP catalyzes the removal of the 5'-leader sequence from pre-tRNA to produce the mature 5'-terminus. It can also cleave other RNA substrates such as 4.5S RNA. The protein component plays an auxiliary but essential role in vivo by binding to the 5'-leader sequence and broadening the substrate specificity of the ribozyme. This chain is Ribonuclease P protein component, found in Xylella fastidiosa (strain 9a5c).